The primary structure comprises 322 residues: Pantothenate kinase (322 aa).

100–107 (GSVAVGKS) contacts ATP.

Belongs to the prokaryotic pantothenate kinase family.

Its subcellular location is the cytoplasm. It catalyses the reaction (R)-pantothenate + ATP = (R)-4'-phosphopantothenate + ADP + H(+). The protein operates within cofactor biosynthesis; coenzyme A biosynthesis; CoA from (R)-pantothenate: step 1/5. In Brucella canis (strain ATCC 23365 / NCTC 10854 / RM-666), this protein is Pantothenate kinase.